A 65-amino-acid chain; its full sequence is Keratin-associated protein 20-2 (65 aa).

This sequence belongs to the KRTAP type 20 family. In terms of assembly, interacts with hair keratins.

Its function is as follows. In the hair cortex, hair keratin intermediate filaments are embedded in an interfilamentous matrix, consisting of hair keratin-associated proteins (KRTAP), which are essential for the formation of a rigid and resistant hair shaft through their extensive disulfide bond cross-linking with abundant cysteine residues of hair keratins. The matrix proteins include the high-sulfur and high-glycine-tyrosine keratins. The polypeptide is Keratin-associated protein 20-2 (KRTAP20-2) (Homo sapiens (Human)).